We begin with the raw amino-acid sequence, 350 residues long: m7GpppX diphosphatase (350 aa).

Ser2 is modified (N-acetylserine). Ser60 is subject to Phosphoserine. At Thr66 the chain carries Phosphothreonine. A Phosphothreonine; by YAK1 modification is found at Thr66. The residue at position 70 (Tyr70) is a Phosphotyrosine. At Thr120 the chain carries Phosphothreonine. Substrate contacts are provided by residues Glu171, Lys196, and 259-270 (HYQPSYYHFHIH). Positions 266–270 (HFHIH) match the Histidine triad motif motif. Catalysis depends on His268, which acts as the Nucleophile.

The protein belongs to the HIT family. As to quaternary structure, homodimer. Forms heterodimer with DCS2; the interaction inhibits the DCS1 scavenger decapping activity during post-diauxic growth. In terms of processing, phosphorylated. Phosphorylation occurs upon glucose deprivation.

The protein resides in the cytoplasm. Its subcellular location is the perinuclear region. The protein localises to the P-body. It carries out the reaction a 5'-end (N(7)-methyl 5'-triphosphoguanosine)-ribonucleoside in mRNA + H2O = N(7)-methyl-GMP + a 5'-end diphospho-ribonucleoside in mRNA + 2 H(+). The hydrolytic product 7-methylguanosine diphosphate (m7GDP) efficiently inhibits the decapping scavenger activity and acts as a competitive inhibitor in vitro. In terms of biological role, decapping scavenger enzyme that catalyzes the cleavage of a residual cap structure following the degradation of mRNAs by the 3'-&gt;5' exosome-mediated mRNA decay pathway. Hydrolyzes cap analog structures like 7-methylguanosine nucleoside triphosphate (m7GpppG) and tri-methyl guanosine nucleoside triphosphate (m3(2,2,7)GpppG) with up to 10 nucleotide substrates (small capped oligoribonucleotides) and specifically releases 5'-phosphorylated RNA fragments and 7-methylguanosine monophosphate (m7GMP) or tri-methyl guanosine nucleoside monophosphate (m3(2,2,7)GMP), respectively. Does not hydrolyze unmethylated cap analog (GpppG) and shows no decapping activity on intact m7GpppG-capped mRNA molecules longer than 25 nucleotides. Does not hydrolyze 7-methylguanosine diphosphate (m7GDP) and tri-methylguanosine diphosphate (m3(2,2,7)GDP) to (m(7)GMP) and m3(2,2,7)GMP, respectively. May also play a role in the 5'-&gt;3 mRNA decay pathway; m7GDP, the downstream product released by the 5'-&gt;3' mRNA mediated decapping activity, may be also converted by DCS1 to m7GMP. Binds to m7GpppG and strongly to m7GDP. May also regulate the 5'-&gt;3' exoribonucleolytic mRNA decay pathway in a cap-independent manner. Negatively regulates trehalase activity. In Saccharomyces cerevisiae (strain ATCC 204508 / S288c) (Baker's yeast), this protein is m7GpppX diphosphatase.